A 154-amino-acid polypeptide reads, in one-letter code: Nuclear cap-binding protein subunit 2 (154 aa).

Residues Tyr10, Tyr33, 102 to 106, 113 to 117, and 123 to 124 contribute to the mRNA site; these read RVDWD, RQYGR, and QV. Residues 30-108 form the RRM domain; it reads CTLYVGNLSF…RLIRVDWDAG (79 aa).

This sequence belongs to the RRM NCBP2 family. In terms of assembly, component of the nuclear cap-binding complex (CBC), a heterodimer composed of Cbp80 and Cbp20 that interacts with m7GpppG-capped RNA. Interacts with Ars2.

The protein resides in the nucleus. Functionally, component of the cap-binding complex (CBC), which binds co-transcriptionally to the 5' cap of pre-mRNAs and is involved in various processes such as pre-mRNA splicing and RNA-mediated gene silencing (RNAi). The CBC complex is involved in miRNA-mediated RNA interference via its interaction with Ars2 and is required for primary microRNAs (miRNAs) processing. Also involved in innate immunity via the short interfering RNAs (siRNAs) processing machinery by restricting the viral RNA production. In the CBC complex, Cbp20 recognizes and binds capped RNAs (m7GpppG-capped RNA) but requires Cbp80 to stabilize the movement of its N-terminal loop and lock the CBC into a high affinity cap-binding state with the cap structure. The polypeptide is Nuclear cap-binding protein subunit 2 (Cbp20) (Drosophila erecta (Fruit fly)).